The chain runs to 126 residues: Fatty acid-binding protein, liver (126 aa).

Cholate is bound by residues 54–56, 99–101, and R121; these read TPN and HEQ.

It belongs to the calycin superfamily. Fatty-acid binding protein (FABP) family.

The protein resides in the cytoplasm. Its function is as follows. FABPs are thought to play a role in the intracellular transport of long-chain fatty acids and their acyl-CoA esters. The chain is Fatty acid-binding protein, liver from Anolis pulchellus (Common grass anole).